Reading from the N-terminus, the 391-residue chain is MAKELRYNAEARLRLERGVNALADAVKVTLGPKGRNAVLEKLTGPPTITNDGVTIAREIQLRDPFANMGAQLVKEVAMKTNGVVGDGTTTATVLAQAMVREGLRAVEQGANPMRVRRGIERAVTAVLGSLTEQAVQIGGRSDLERIARWPPATTRWSVRSSPPPSNTSARTASSPPRRATHSGCRSRSSTASEFDHGYISGYMVTNPERMEAVLDNPVVLLTNKKITSVQEIMPAIEVAKRADRPLLVLAEDVDGPALQLLVGGNMHNTMRSVVVRAPGFGHRRIAELEDLSVALGGHVIAKDTGIELSEVSMEHLGTVMRVTVTENETTIVGAHGEQELVDARVRHLEAQLERARIDADRDALELRIARMTGRVAVIRVGGVTSVELKER.

The tract at residues 153-191 (TTRWSVRSSPPPSNTSARTASSPPRRATHSGCRSRSSTA) is disordered. Polar residues predominate over residues 154–174 (TRWSVRSSPPPSNTSARTASS).

This sequence belongs to the chaperonin (HSP60) family.

Functionally, probably plays an essential role in the productive folding of PrmA and PrmC, and thus in the formation of the active PrmABCD complex. This Gordonia sp. (strain TY-5) protein is Probable chaperonin-like protein PrmG.